Consider the following 296-residue polypeptide: Ribosomal protein L11 methyltransferase (296 aa).

S-adenosyl-L-methionine is bound by residues Thr147, Gly168, Asp190, and Asn232.

Belongs to the methyltransferase superfamily. PrmA family.

It localises to the cytoplasm. It carries out the reaction L-lysyl-[protein] + 3 S-adenosyl-L-methionine = N(6),N(6),N(6)-trimethyl-L-lysyl-[protein] + 3 S-adenosyl-L-homocysteine + 3 H(+). Functionally, methylates ribosomal protein L11. This chain is Ribosomal protein L11 methyltransferase, found in Marinomonas sp. (strain MWYL1).